We begin with the raw amino-acid sequence, 397 residues long: Succinate--CoA ligase [ADP-forming] subunit beta (397 aa).

Residues 9–254 form the ATP-grasp domain; it reads KALLKSFGAP…KSEEDEKEIQ (246 aa). ATP contacts are provided by residues K46, 53–55, E109, A112, and E117; that span reads GRG. Residues N209 and D223 each contribute to the Mg(2+) site. Substrate is bound by residues N274 and 331-333; that span reads GIM.

It belongs to the succinate/malate CoA ligase beta subunit family. Heterotetramer of two alpha and two beta subunits. Mg(2+) is required as a cofactor.

It catalyses the reaction succinate + ATP + CoA = succinyl-CoA + ADP + phosphate. The enzyme catalyses GTP + succinate + CoA = succinyl-CoA + GDP + phosphate. It functions in the pathway carbohydrate metabolism; tricarboxylic acid cycle; succinate from succinyl-CoA (ligase route): step 1/1. Its function is as follows. Succinyl-CoA synthetase functions in the citric acid cycle (TCA), coupling the hydrolysis of succinyl-CoA to the synthesis of either ATP or GTP and thus represents the only step of substrate-level phosphorylation in the TCA. The beta subunit provides nucleotide specificity of the enzyme and binds the substrate succinate, while the binding sites for coenzyme A and phosphate are found in the alpha subunit. The chain is Succinate--CoA ligase [ADP-forming] subunit beta from Rhizobium rhizogenes (strain K84 / ATCC BAA-868) (Agrobacterium radiobacter).